The following is a 426-amino-acid chain: Histidinol dehydrogenase (426 aa).

The NAD(+) site is built by Y125, Q187, and N210. Residues S233, Q255, and H258 each contribute to the substrate site. Residues Q255 and H258 each coordinate Zn(2+). Active-site proton acceptor residues include E323 and H324. Residues H324, D357, E411, and H416 each contribute to the substrate site. D357 provides a ligand contact to Zn(2+). H416 contacts Zn(2+).

It belongs to the histidinol dehydrogenase family. Zn(2+) serves as cofactor.

The enzyme catalyses L-histidinol + 2 NAD(+) + H2O = L-histidine + 2 NADH + 3 H(+). It functions in the pathway amino-acid biosynthesis; L-histidine biosynthesis; L-histidine from 5-phospho-alpha-D-ribose 1-diphosphate: step 9/9. In terms of biological role, catalyzes the sequential NAD-dependent oxidations of L-histidinol to L-histidinaldehyde and then to L-histidine. The protein is Histidinol dehydrogenase (hisD) of Methanothermobacter thermautotrophicus (strain ATCC 29096 / DSM 1053 / JCM 10044 / NBRC 100330 / Delta H) (Methanobacterium thermoautotrophicum).